A 255-amino-acid polypeptide reads, in one-letter code: MNLAVVGYKLTLSYCGSGFHGWQRQGELPTVQRALEEAVAKIWEEPIPVEGAGRTDAGVHAKGQVASFAAPRKLEPEVLKRALNYHLPDTVRVWDARIVPREFSARFDAVSKTYQYLLWNDPVMDPFYLGRAWHIPRAMDVEMMNEAARLFLGKHNFAAFVSNPGMPVKNPVRTVLDCFFLEQGSLVFFNVKADGFLYRMVRNMVGALVKVGLGRLSRQELKKIFENQKRIEAFAAAPPWGLYLLAVDYPPDQES.

Residue Asp56 is the Nucleophile of the active site. Residue Tyr114 participates in substrate binding.

It belongs to the tRNA pseudouridine synthase TruA family. In terms of assembly, homodimer.

The enzyme catalyses uridine(38/39/40) in tRNA = pseudouridine(38/39/40) in tRNA. In terms of biological role, formation of pseudouridine at positions 38, 39 and 40 in the anticodon stem and loop of transfer RNAs. The polypeptide is tRNA pseudouridine synthase A (Methylacidiphilum infernorum (isolate V4) (Methylokorus infernorum (strain V4))).